Here is a 399-residue protein sequence, read N- to C-terminus: Enoyl-[acyl-carrier-protein] reductase [NADH] 2 (399 aa).

NAD(+) contacts are provided by residues 48-53, 75-76, 112-113, and 141-142; these read GASSGF, FE, DA, and LA. Tyrosine 227 contacts substrate. The active-site Proton donor is the tyrosine 237. Residues lysine 246 and 275–277 contribute to the NAD(+) site; that span reads LVT.

The protein belongs to the TER reductase family. As to quaternary structure, monomer.

The enzyme catalyses a 2,3-saturated acyl-[ACP] + NAD(+) = a (2E)-enoyl-[ACP] + NADH + H(+). The protein operates within lipid metabolism; fatty acid biosynthesis. Functionally, involved in the final reduction of the elongation cycle of fatty acid synthesis (FAS II). Catalyzes the reduction of a carbon-carbon double bond in an enoyl moiety that is covalently linked to an acyl carrier protein (ACP). The sequence is that of Enoyl-[acyl-carrier-protein] reductase [NADH] 2 from Vibrio parahaemolyticus serotype O3:K6 (strain RIMD 2210633).